The chain runs to 96 residues: Pyrimidine/purine nucleoside phosphorylase (96 aa).

It belongs to the nucleoside phosphorylase PpnP family.

The catalysed reaction is a purine D-ribonucleoside + phosphate = a purine nucleobase + alpha-D-ribose 1-phosphate. It carries out the reaction adenosine + phosphate = alpha-D-ribose 1-phosphate + adenine. It catalyses the reaction cytidine + phosphate = cytosine + alpha-D-ribose 1-phosphate. The enzyme catalyses guanosine + phosphate = alpha-D-ribose 1-phosphate + guanine. The catalysed reaction is inosine + phosphate = alpha-D-ribose 1-phosphate + hypoxanthine. It carries out the reaction thymidine + phosphate = 2-deoxy-alpha-D-ribose 1-phosphate + thymine. It catalyses the reaction uridine + phosphate = alpha-D-ribose 1-phosphate + uracil. The enzyme catalyses xanthosine + phosphate = alpha-D-ribose 1-phosphate + xanthine. Functionally, catalyzes the phosphorolysis of diverse nucleosides, yielding D-ribose 1-phosphate and the respective free bases. Can use uridine, adenosine, guanosine, cytidine, thymidine, inosine and xanthosine as substrates. Also catalyzes the reverse reactions. The chain is Pyrimidine/purine nucleoside phosphorylase from Erwinia tasmaniensis (strain DSM 17950 / CFBP 7177 / CIP 109463 / NCPPB 4357 / Et1/99).